Consider the following 145-residue polypeptide: D-aminoacyl-tRNA deacylase (145 aa).

Positions 133–134 (GP) match the Gly-cisPro motif, important for rejection of L-amino acids motif.

Belongs to the DTD family. In terms of assembly, homodimer.

It is found in the cytoplasm. It carries out the reaction glycyl-tRNA(Ala) + H2O = tRNA(Ala) + glycine + H(+). It catalyses the reaction a D-aminoacyl-tRNA + H2O = a tRNA + a D-alpha-amino acid + H(+). Its function is as follows. An aminoacyl-tRNA editing enzyme that deacylates mischarged D-aminoacyl-tRNAs. Also deacylates mischarged glycyl-tRNA(Ala), protecting cells against glycine mischarging by AlaRS. Acts via tRNA-based rather than protein-based catalysis; rejects L-amino acids rather than detecting D-amino acids in the active site. By recycling D-aminoacyl-tRNA to D-amino acids and free tRNA molecules, this enzyme counteracts the toxicity associated with the formation of D-aminoacyl-tRNA entities in vivo and helps enforce protein L-homochirality. This chain is D-aminoacyl-tRNA deacylase, found in Cutibacterium acnes (strain DSM 16379 / KPA171202) (Propionibacterium acnes).